We begin with the raw amino-acid sequence, 257 residues long: Ribonuclease HII (257 aa).

An RNase H type-2 domain is found at 72 to 257; it reads TYIAGIDEVG…FAPIKDMIQK (186 aa). A divalent metal cation-binding residues include D78, E79, and D170.

This sequence belongs to the RNase HII family. It depends on Mn(2+) as a cofactor. Mg(2+) serves as cofactor.

Its subcellular location is the cytoplasm. It catalyses the reaction Endonucleolytic cleavage to 5'-phosphomonoester.. In terms of biological role, endonuclease that specifically degrades the RNA of RNA-DNA hybrids. This chain is Ribonuclease HII, found in Bacillus cereus (strain ATCC 14579 / DSM 31 / CCUG 7414 / JCM 2152 / NBRC 15305 / NCIMB 9373 / NCTC 2599 / NRRL B-3711).